We begin with the raw amino-acid sequence, 953 residues long: TPR repeat-containing protein ZIP4 (953 aa).

Residues 129–162 form a TPR 1 repeat; it reads ASFFHRSGLAWLDLGRVDLASACFEKATPLVSAA. Residues 248–269 form a disordered region; the sequence is AASPSSSSPRTPPYGGATPKTP. TPR repeat units follow at residues 432–465 and 473–506; these read HALLWNCGTEHFRAKNYDTSADLIERSMLYVSRD and ADCFRVLSICHIALQHLDRALEFVNEAYKVEPNI. The interval 924–953 is disordered; it reads RVSGDEPDECSQEEAPKASISGSMSQPVLV. The span at 943–953 shows a compositional bias: polar residues; that stretch reads ISGSMSQPVLV.

It is found in the nucleus. It localises to the chromosome. Functionally, required for crossover formation, complete synapsis of homologous chromosomes and bivalent formation during meiosis. Is specific to recombination events resulting in interference-sensitive crossovers (class I meiotic crossover) and works cooperatively with MER3 to promote crossovers. The protein is TPR repeat-containing protein ZIP4 of Oryza sativa subsp. indica (Rice).